A 576-amino-acid polypeptide reads, in one-letter code: Formate--tetrahydrofolate ligase (576 aa).

Position 64-71 (64-71) interacts with ATP; it reads TPLGEGKT.

It belongs to the formate--tetrahydrofolate ligase family.

It carries out the reaction (6S)-5,6,7,8-tetrahydrofolate + formate + ATP = (6R)-10-formyltetrahydrofolate + ADP + phosphate. It functions in the pathway one-carbon metabolism; tetrahydrofolate interconversion. The polypeptide is Formate--tetrahydrofolate ligase (Aeromonas hydrophila subsp. hydrophila (strain ATCC 7966 / DSM 30187 / BCRC 13018 / CCUG 14551 / JCM 1027 / KCTC 2358 / NCIMB 9240 / NCTC 8049)).